Reading from the N-terminus, the 639-residue chain is Methyl-accepting chemotaxis protein McpS (639 aa).

Residues 1 to 13 (MNSWFANISVNLK) are Cytoplasmic-facing. The helical transmembrane segment at 14–34 (LGLGFGLVLVLTGLLALTGWT) threads the bilayer. The Periplasmic segment spans residues 35–288 (SLGSLIDRSN…RDIESTQARS (254 aa)). One can recognise an HBM domain in the interval 41–283 (DRSNWMGDIG…IQLERRDIES (243 aa)). A (S)-malate-binding site is contributed by 60-65 (RIARLQ). 60 to 65 (RIARLQ) serves as a coordination point for succinate. 4 residues coordinate acetate: D138, R183, R187, and Y236. Positions 191–245 (AENSSANEQAALRQLDAALADTDNLKRQLPSEDARLQQFENAVLAYRDAVRQFRD) form a coiled coil. 2 residues coordinate (S)-malate: R254 and T258. Position 254 (R254) interacts with succinate. The helical transmembrane segment at 289-309 (LQAIATLLALLVGVLAAVLIT) threads the bilayer. Residues 310 to 362 (RQITRPLQDTLVAVEKIASGDLTQHMRVTRRDELGVLQQGIARMGTTLRELIS) form the HAMP domain. Residues 310-639 (RQITRPLQDT…LQTLVSQFRV (330 aa)) lie on the Cytoplasmic side of the membrane. In terms of domain architecture, Methyl-accepting transducer spans 367 to 603 (GVTQIASAAE…EISRSILNVR (237 aa)).

Belongs to the methyl-accepting chemotaxis (MCP) protein family. In terms of assembly, homodimer. Exists as a mixture of monomers and dimers in solution. Ligand binding stabilizes the dimeric form. In terms of processing, methylated by CheR2.

The protein localises to the cell membrane. With respect to regulation, binding of citrate to the ligand-binding domain reduces the chemotaxis towards the strong attractants such as malate and succinate. However, in physiologically relevant niches, citrate is mostly complexed with magnesium or calcium ions, and does not bind McpS. Chemotactic-signal transducers respond to changes in the concentration of attractants and repellents in the environment, transduce a signal from the outside to the inside of the cell, and facilitate sensory adaptation through the variation of the level of methylation. McpS is a specific chemoreceptor for 6 tricarboxylic acid (TCA) cycle intermediates (succinate, fumarate, malate, oxaloacetate, citrate and isocitrate), butyrate and acetate. Malate, succinate, fumarate and oxaloacetate cause the strongest chemotactic response. The sequence is that of Methyl-accepting chemotaxis protein McpS (mcpS) from Pseudomonas putida (strain ATCC 47054 / DSM 6125 / CFBP 8728 / NCIMB 11950 / KT2440).